Reading from the N-terminus, the 915-residue chain is Protein translocase subunit SecA (915 aa).

ATP-binding positions include Gln87, 105-109, and Asp512; that span reads GEGKT. The interval 881-915 is disordered; the sequence is LPGTAPVRPEPKIGRNEPCPCGSGKKYKHCHGQLN. Zn(2+) contacts are provided by Cys899, Cys901, Cys910, and His911. Residues 905-915 are compositionally biased toward basic residues; sequence KKYKHCHGQLN.

Belongs to the SecA family. Monomer and homodimer. Part of the essential Sec protein translocation apparatus which comprises SecA, SecYEG and auxiliary proteins SecDF-YajC and YidC. Zn(2+) is required as a cofactor.

The protein localises to the cell inner membrane. The protein resides in the cytoplasm. The catalysed reaction is ATP + H2O + cellular proteinSide 1 = ADP + phosphate + cellular proteinSide 2.. Part of the Sec protein translocase complex. Interacts with the SecYEG preprotein conducting channel. Has a central role in coupling the hydrolysis of ATP to the transfer of proteins into and across the cell membrane, serving both as a receptor for the preprotein-SecB complex and as an ATP-driven molecular motor driving the stepwise translocation of polypeptide chains across the membrane. The chain is Protein translocase subunit SecA from Azotobacter vinelandii (strain DJ / ATCC BAA-1303).